The primary structure comprises 154 residues: Cell cycle regulator of non-homologous end joining (154 aa).

N-acetylmethionine is present on M1. The short motif at 1–21 is the KBM element; sequence METLKSENKKRVLPSWMTAPV. The disordered stretch occupies residues 77 to 144; the sequence is EEPTLVAPDK…RSPEEEEEDA (68 aa). The span at 95–105 shows a compositional bias: low complexity; the sequence is ASPHTSSPGSS. An XLM motif is present at residues 144 to 154; that stretch reads ALKYVREIFFS.

In terms of assembly, interacts (via KBM motif) with XRCC5/Ku80 and XRCC6/Ku70 heterodimer. Interacts (via XLF motif) with TRIM28/KAP1, ATM, MRE11, NBN and RAD50. Interacts with splicing factor SF3B1. Interacts with ERCC6L2; this interaction is DNA independent.

The protein resides in the cytoplasm. The protein localises to the nucleus. Its subcellular location is the chromosome. Cell-cycle-specific regulator of classical non-homologous end joining (NHEJ) of DNA double-strand break (DSB) repair, which can act both as an activator or inhibitor of NHEJ, depending on the cell cycle phase. Acts as a regulator of DNA repair pathway choice by specifically inhibiting classical NHEJ during the S and G2 phases, thereby promoting error-free repair by homologous recombination during cell cycle phases when sister chromatids are present. Preferentially protects single-stranded overhangs at break sites by inhibiting classical NHEJ, thereby creating a local environment that favors homologous recombination. Acts via interaction with XRCC5/Ku80 and XRCC6/Ku70. In contrast, acts as an activator of NHEJ during G1 phase of the cell cycle: promotes classical NHEJ in G1 phase cells via multivalent interactions that increase the affinity of DNA damage response proteins for DSB-associated chromatin. Also involved in immunoglobulin V(D)J recombination. May act as a regulator of proteasome. In case of infection by a retrovirus, may regulate the proteasome during the uncoating phase of retrovirus. This is Cell cycle regulator of non-homologous end joining from Cricetulus griseus (Chinese hamster).